The primary structure comprises 261 residues: Segregation and condensation protein A (261 aa).

It belongs to the ScpA family. In terms of assembly, component of a cohesin-like complex composed of ScpA, ScpB and the Smc homodimer, in which ScpA and ScpB bind to the head domain of Smc. The presence of the three proteins is required for the association of the complex with DNA.

The protein localises to the cytoplasm. Its function is as follows. Participates in chromosomal partition during cell division. May act via the formation of a condensin-like complex containing Smc and ScpB that pull DNA away from mid-cell into both cell halves. The polypeptide is Segregation and condensation protein A (Ligilactobacillus salivarius (strain UCC118) (Lactobacillus salivarius)).